A 228-amino-acid polypeptide reads, in one-letter code: A-type ATP synthase subunit D (228 aa).

The segment covering 205–214 (KKEEEEKAEA) has biased composition (basic and acidic residues). A disordered region spans residues 205 to 228 (KKEEEEKAEAAAEAAAVEDPEPAD).

This sequence belongs to the V-ATPase D subunit family. As to quaternary structure, has multiple subunits with at least A(3), B(3), C, D, E, F, H, I and proteolipid K(x).

It is found in the cell membrane. Component of the A-type ATP synthase that produces ATP from ADP in the presence of a proton gradient across the membrane. The polypeptide is A-type ATP synthase subunit D (Halorubrum lacusprofundi (strain ATCC 49239 / DSM 5036 / JCM 8891 / ACAM 34)).